The sequence spans 130 residues: UPF0102 protein RPA0323 (130 aa).

It belongs to the UPF0102 family.

This chain is UPF0102 protein RPA0323, found in Rhodopseudomonas palustris (strain ATCC BAA-98 / CGA009).